A 327-amino-acid chain; its full sequence is Sphingomyelinase D (327 aa).

The signal sequence occupies residues 1–23 (MQPLTRTICALFCLLLTLPLTFG). Residue His-52 is part of the active site. Mg(2+)-binding residues include Glu-72, Asp-74, and Asp-117. The SMD-tail signature appears at 320–327 (VTGADKLW).

It belongs to the sphingomyelinase D/phospholipase D family. It depends on Mg(2+) as a cofactor.

The protein resides in the secreted. It catalyses the reaction a sphingomyelin + H2O = an N-acylsphing-4-enine 1-phosphate + choline + H(+). Its function is as follows. Catalyzes the hydrolysis of sphingomyelin. Sphingomyelinases D are produced by some spider in their venoms, but also by arthropods such as ticks, or pathogenic bacteria and fungi. They might play a role in pathogenicity through different mechanisms, such as membrane destabilization and host cell penetration, but also pulmonary inflammation and cutaneous lesions. This is Sphingomyelinase D from Paracoccidioides brasiliensis (strain Pb03).